A 104-amino-acid polypeptide reads, in one-letter code: Large ribosomal subunit protein uL24 (104 aa).

The protein belongs to the universal ribosomal protein uL24 family. In terms of assembly, part of the 50S ribosomal subunit.

Its function is as follows. One of two assembly initiator proteins, it binds directly to the 5'-end of the 23S rRNA, where it nucleates assembly of the 50S subunit. One of the proteins that surrounds the polypeptide exit tunnel on the outside of the subunit. The sequence is that of Large ribosomal subunit protein uL24 from Enterobacter sp. (strain 638).